We begin with the raw amino-acid sequence, 333 residues long: Acetyl-coenzyme A carboxylase carboxyl transferase subunit alpha (333 aa).

The region spanning 48–308 (LLEQKVDALR…KEMLVEELRD (261 aa)) is the CoA carboxyltransferase C-terminal domain.

The protein belongs to the AccA family. Acetyl-CoA carboxylase is a heterohexamer composed of biotin carboxyl carrier protein (AccB), biotin carboxylase (AccC) and two subunits each of ACCase subunit alpha (AccA) and ACCase subunit beta (AccD).

It is found in the cytoplasm. It carries out the reaction N(6)-carboxybiotinyl-L-lysyl-[protein] + acetyl-CoA = N(6)-biotinyl-L-lysyl-[protein] + malonyl-CoA. Its pathway is lipid metabolism; malonyl-CoA biosynthesis; malonyl-CoA from acetyl-CoA: step 1/1. In terms of biological role, component of the acetyl coenzyme A carboxylase (ACC) complex. First, biotin carboxylase catalyzes the carboxylation of biotin on its carrier protein (BCCP) and then the CO(2) group is transferred by the carboxyltransferase to acetyl-CoA to form malonyl-CoA. The protein is Acetyl-coenzyme A carboxylase carboxyl transferase subunit alpha of Chlorobium limicola (strain DSM 245 / NBRC 103803 / 6330).